A 424-amino-acid polypeptide reads, in one-letter code: S-adenosylmethionine synthase (424 aa).

Histidine 16 is a binding site for ATP. A Mg(2+)-binding site is contributed by aspartate 18. Glutamate 44 contacts K(+). Positions 57 and 100 each coordinate L-methionine. The segment at 100–110 is flexible loop; sequence QSPDIAQGVNT. ATP contacts are provided by residues 175–177, 251–252, aspartate 260, 266–267, alanine 283, and lysine 287; these read DGK, KF, and RK. Residue aspartate 260 participates in L-methionine binding. Residue lysine 291 participates in L-methionine binding.

It belongs to the AdoMet synthase family. Homotetramer; dimer of dimers. Requires Mg(2+) as cofactor. K(+) is required as a cofactor.

The protein localises to the cytoplasm. The catalysed reaction is L-methionine + ATP + H2O = S-adenosyl-L-methionine + phosphate + diphosphate. Its pathway is amino-acid biosynthesis; S-adenosyl-L-methionine biosynthesis; S-adenosyl-L-methionine from L-methionine: step 1/1. Catalyzes the formation of S-adenosylmethionine (AdoMet) from methionine and ATP. The overall synthetic reaction is composed of two sequential steps, AdoMet formation and the subsequent tripolyphosphate hydrolysis which occurs prior to release of AdoMet from the enzyme. The protein is S-adenosylmethionine synthase of Nostoc punctiforme (strain ATCC 29133 / PCC 73102).